We begin with the raw amino-acid sequence, 275 residues long: T cell receptor alpha chain MC.7.G5 (275 aa).

An N-terminal signal peptide occupies residues 1-21; that stretch reads MACPGFLWALVISTCLEFSMA. Residues 22–116 enclose the Ig-like V-type domain; sequence QTVTQSQPEM…AAMYFCAYRS (95 aa). The interval 22–116 is t cell receptor alpha variable 38-2DV8; the sequence is QTVTQSQPEM…AAMYFCAYRS (95 aa). Cys-43 and Cys-112 are disulfide-bonded. Positions 47–53 are CDR1; the sequence is TSESDYY. The interval 71 to 81 is CDR2; the sequence is QEAYKQQNATE. An N-linked (GlcNAc...) asparagine glycan is attached at Asn-78. Residues 112–124 form a CDR3 region; the sequence is CAYRSAVNARLMF. A t cell receptor alpha joining 31 region spans residues 119 to 134; that stretch reads NARLMFGDGTQLVVKP. A t cell receptor alpha constant region spans residues 136–275; the sequence is IQNPDPAVYQ…LLMTLRLWSS (140 aa). The 89-residue stretch at 154 to 242 folds into the Ig-like C1-type domain; it reads KSVCLFTDFD…LVEKSFETDT (89 aa). The cysteines at positions 157 and 207 are disulfide-linked. N-linked (GlcNAc...) asparagine glycosylation is found at Asn-167, Asn-201, Asn-212, and Asn-248. Residues 229 to 250 are connecting peptide; that stretch reads CDVKLVEKSFETDTNLNFQNLS. Residues 251-273 form a helical membrane-spanning segment; sequence VIGFRILLLKVAGFNLLMTLRLW. At 274–275 the chain is on the cytoplasmic side; it reads SS.

As to quaternary structure, disulfide-linked heterodimer with TRBV25-1*01J2S3*01C2*01 beta chain. The alpha-beta TR associates with the transmembrane signaling CD3 coreceptor proteins to form the TR-CD3 (TCR). The assembly of alpha-beta TR heterodimers with CD3 occurs in the endoplasmic reticulum where a single alpha-beta TR heterodimer associates with one CD3D-CD3E heterodimer, one CD3G-CD3E heterodimer and one CD247 homodimer forming a stable octameric structure. CD3D-CD3E and CD3G-CD3E heterodimers preferentially associate with TR alpha and TR beta chains (via TM domain), respectively. The association of the CD247 homodimer is the last step of TCR assembly in the endoplasmic reticulum and is required for transport to the cell surface. Expressed in MR1-restricted CD8-positive T cells.

Its subcellular location is the cell membrane. Its function is as follows. The alpha chain of TRAV38-2DV8*01J31*01C*01/TRBV25-1*01J2S3*01C2*01 alpha-beta T cell receptor (TR) clonotype that displays pan-cancer cell recognition via the invariant MR1 molecule. On CD8-positive T cell clone MC.7.G5, likely recognizes tumor-specific or -associated metabolite(s) essential for cancer cell survival, triggering killing of many cancer cell types including lung, melanoma, leukemia, colon, breast, prostate, bone and ovarian cancer cells. Mediates cancer cell cytotoxicity in an HLA-independent manner. Has no reactivity to healthy cells, even stressed or infected by bacteria. Antigen recognition initiates TR-CD3 clustering on the cell surface and intracellular activation of LCK that phosphorylates the ITAM motifs of CD3G, CD3D, CD3E and CD247 enabling the recruitment of ZAP70. In turn, ZAP70 phosphorylates LAT, which recruits numerous signaling molecules to form the LAT signalosome. The LAT signalosome propagates signal branching to three major signaling pathways, the calcium, the mitogen-activated protein kinase (MAPK) kinase and the nuclear factor NF-kappa-B (NF-kB) pathways, leading to the mobilization of transcription factors that are critical for gene expression and essential for T cell differentiation into effector/memory T cells. The sequence is that of T cell receptor alpha chain MC.7.G5 from Homo sapiens (Human).